The following is an 801-amino-acid chain: Phenylalanine--tRNA ligase beta subunit (801 aa).

In terms of domain architecture, tRNA-binding spans 39–148 (AGSFTGVKVG…EDAVIGTDFR (110 aa)). One can recognise a B5 domain in the interval 401 to 476 (PKPNKVALRR…RIYGYDNIPN (76 aa)). Aspartate 454, aspartate 460, glutamate 463, and glutamate 464 together coordinate Mg(2+). An FDX-ACB domain is found at 707–800 (SKFPSNRRDI…VSEKFGAALR (94 aa)).

It belongs to the phenylalanyl-tRNA synthetase beta subunit family. Type 1 subfamily. As to quaternary structure, tetramer of two alpha and two beta subunits. It depends on Mg(2+) as a cofactor.

Its subcellular location is the cytoplasm. The enzyme catalyses tRNA(Phe) + L-phenylalanine + ATP = L-phenylalanyl-tRNA(Phe) + AMP + diphosphate + H(+). This Vibrio parahaemolyticus serotype O3:K6 (strain RIMD 2210633) protein is Phenylalanine--tRNA ligase beta subunit.